A 149-amino-acid chain; its full sequence is Oligosaccharyltransferase complex subunit OSTC (149 aa).

Topologically, residues 1-32 (METLYRVPFLVLECPNLKLKKPPWLHMPSAMT) are cytoplasmic. A helical transmembrane segment spans residues 33 to 53 (VYALVVVSYFLITGGIIYDVI). At 54–83 (VEPPSVGSMTDEHGHQRPVAFLAYRVNGQY) the chain is on the extracellular side. A helical membrane pass occupies residues 84-104 (IMEGLASSFLFTMGGLGFIIL). Over 105–117 (DRSNAPNIPKLNR) the chain is Cytoplasmic. Residues 118–138 (FLLLFIGFVCVLLSFFMARVF) traverse the membrane as a helical segment. Residues 139 to 149 (MRMKLPGYLMG) lie on the Extracellular side of the membrane.

It belongs to the OSTC family. In terms of assembly, component of STT3A-containing oligosaccharyl transferase (OST-A) complex. STT3A-containing complex assembly occurs through the formation of 3 subcomplexes. Subcomplex 1 contains RPN1 and TMEM258, subcomplex 2 contains the STT3A-specific subunits STT3A, DC2/OSTC, and KCP2 as well as the core subunit OST4, and subcomplex 3 contains RPN2, DAD1, and OST48. The OST-A complex can form stable complexes with the Sec61 complex or with both the Sec61 and TRAP complexes. Interacts with PSEN1 and NCSTN; indicative for an association with the gamma-secretase complex.

It localises to the endoplasmic reticulum. It is found in the membrane. The protein operates within protein modification; protein glycosylation. Functionally, subunit of STT3A-containing oligosaccharyl transferase (OST-A) complex that catalyzes the initial transfer of a defined glycan (Glc(3)Man(9)GlcNAc(2) in eukaryotes) from the lipid carrier dolichol-pyrophosphate to an asparagine residue within an Asn-X-Ser/Thr consensus motif in nascent polypeptide chains, the first step in protein N-glycosylation. N-glycosylation occurs cotranslationally and the complex associates with the Sec61 complex at the channel-forming translocon complex that mediates protein translocation across the endoplasmic reticulum (ER). Within the OST-A complex, acts as an adapter that anchors the OST-A complex to the Sec61 complex. May be involved in N-glycosylation of APP (amyloid-beta precursor protein). Can modulate gamma-secretase cleavage of APP by enhancing endoprotelysis of PSEN1. The chain is Oligosaccharyltransferase complex subunit OSTC from Homo sapiens (Human).